A 166-amino-acid chain; its full sequence is Anaerobic nitrite reductase NSHB1 (166 aa).

Residues 13 to 163 (SFSEEQEALV…LVAAIKQEMK (151 aa)) enclose the Globin domain. The short motif at 46–50 (EVAPS) is the Homodimerization element. S56, K70, H74, R104, T108, and H109 together coordinate heme b. The Homodimerization motif lies at 116–128 (DAHFEVVKFALLD).

The protein belongs to the plant globin family. In terms of assembly, homodimer. The cofactor is heme b. As to expression, expressed in coleoptiles, embryos, leaves, seminal roots and roots.

It localises to the cytoplasm. It is found in the nucleus. The catalysed reaction is Fe(III)-heme b-[protein] + nitric oxide + H2O = Fe(II)-heme b-[protein] + nitrite + 2 H(+). With respect to regulation, slowly reduced by ascorbic acid (AA); this reaction may become a source of nitric oxide (NO) during hypoxia. Functionally, phytoglobin that reduces nitrite to nitric oxide under anoxic conditions (e.g. during flooding or in waterlogged soil). May not function as an oxygen storage or transport protein. Has an unusually high affinity for O(2) through a hexacoordinate heme iron because of a very low dissociation constant. In Oryza sativa subsp. japonica (Rice), this protein is Anaerobic nitrite reductase NSHB1.